A 277-amino-acid chain; its full sequence is Ribonuclease HII (277 aa).

The disordered stretch occupies residues 1 to 32 (MIRNQANKPGRAKAATAARKSPLTKSAAKPAA). The span at 20–32 (KSPLTKSAAKPAA) shows a compositional bias: low complexity. The RNase H type-2 domain maps to 64-252 (WPVAGCDEAG…VVAARRKHQP (189 aa)). A divalent metal cation is bound by residues aspartate 70, glutamate 71, and aspartate 161.

The protein belongs to the RNase HII family. It depends on Mn(2+) as a cofactor. Mg(2+) is required as a cofactor.

It localises to the cytoplasm. The enzyme catalyses Endonucleolytic cleavage to 5'-phosphomonoester.. Functionally, endonuclease that specifically degrades the RNA of RNA-DNA hybrids. This Bradyrhizobium sp. (strain ORS 278) protein is Ribonuclease HII.